Consider the following 919-residue polypeptide: Isoleucine--tRNA ligase (919 aa).

Positions 57-67 (PYANGNIHIGH) match the 'HIGH' region motif. Residue Glu-569 participates in L-isoleucyl-5'-AMP binding. Residues 610-614 (KMSKS) carry the 'KMSKS' region motif. Lys-613 lines the ATP pocket. 4 residues coordinate Zn(2+): Cys-896, Cys-899, Cys-911, and Cys-914.

This sequence belongs to the class-I aminoacyl-tRNA synthetase family. IleS type 1 subfamily. In terms of assembly, monomer. Zn(2+) is required as a cofactor.

It localises to the cytoplasm. The enzyme catalyses tRNA(Ile) + L-isoleucine + ATP = L-isoleucyl-tRNA(Ile) + AMP + diphosphate. Catalyzes the attachment of isoleucine to tRNA(Ile). As IleRS can inadvertently accommodate and process structurally similar amino acids such as valine, to avoid such errors it has two additional distinct tRNA(Ile)-dependent editing activities. One activity is designated as 'pretransfer' editing and involves the hydrolysis of activated Val-AMP. The other activity is designated 'posttransfer' editing and involves deacylation of mischarged Val-tRNA(Ile). This Aliarcobacter butzleri (strain RM4018) (Arcobacter butzleri) protein is Isoleucine--tRNA ligase.